The sequence spans 278 residues: Pantothenate synthetase (278 aa).

ATP is bound at residue 28–35 (MGNLHAGH). The active-site Proton donor is H35. A (R)-pantoate-binding site is contributed by Q59. Residue Q59 coordinates beta-alanine. 145–148 (GKKD) serves as a coordination point for ATP. Q151 contacts (R)-pantoate. ATP is bound at residue 182-185 (LSSR).

The protein belongs to the pantothenate synthetase family. Homodimer.

The protein localises to the cytoplasm. It catalyses the reaction (R)-pantoate + beta-alanine + ATP = (R)-pantothenate + AMP + diphosphate + H(+). It participates in cofactor biosynthesis; (R)-pantothenate biosynthesis; (R)-pantothenate from (R)-pantoate and beta-alanine: step 1/1. Catalyzes the condensation of pantoate with beta-alanine in an ATP-dependent reaction via a pantoyl-adenylate intermediate. The chain is Pantothenate synthetase from Methylobacillus flagellatus (strain ATCC 51484 / DSM 6875 / VKM B-1610 / KT).